A 360-amino-acid chain; its full sequence is MKATIIFFLVAQVSWAGPFQQKGLFDFMLEDEASGIGPEERFHEVPELEPMGPVCPFRCQCHLRVVQCSDLGLEKVPKDLPPDTALLDLQNNKITEIKDGDFKNLKNLHTLILINNKISKISPGAFAPLVKLERLYLSKNQLKELPEKMPKTLQELRVHENEITKVRKSVFNGLNQMIVVELGTNPLKSSGIENGAFQGMKKLSYIRIADTNITTIPQGLPPSLTELHLDGNKITKVDAASLKGLNNLAKLGLSFNSISAVDNGSLANTPHLRELHLNNNKLVKVPGGLADHKYIQVVYLHNNNISAIGSNDFCPPGYNTKKASYSGVSLFSNPVQYWEIQPSTFRCVYVRAAVQLGNYK.

Residues 1–16 (MKATIIFFLVAQVSWA) form the signal peptide. The propeptide occupies 17–30 (GPFQQKGLFDFMLE). Ser-34 carries O-linked (Xyl...) (glycosaminoglycan) serine glycosylation. Intrachain disulfides connect Cys-55/Cys-61 and Cys-59/Cys-68. LRR repeat units lie at residues 74–94 (EKVPKDLPPDTALLDLQNNKI), 95–118 (TEIKDGDFKNLKNLHTLILINNKI), 119–142 (SKISPGAFAPLVKLERLYLSKNQL), 143–163 (KELPEKMPKTLQELRVHENEI), 164–187 (TKVRKSVFNGLNQMIVVELGTNPL), 188–213 (KSSGIENGAFQGMKKLSYIRIADTNI), 214–234 (TTIPQGLPPSLTELHLDGNKI), 235–258 (TKVDAASLKGLNNLAKLGLSFNSI), 259–282 (SAVDNGSLANTPHLRELHLNNNKL), 283–305 (VKVPGGLADHKYIQVVYLHNNNI), 306–335 (SAIGSNDFCPPGYNTKKASYSGVSLFSNPV), and 336–360 (QYWEIQPSTFRCVYVRAAVQLGNYK). Asn-212 is a glycosylation site (N-linked (GlcNAc...) asparagine). N-linked (GlcNAc...) asparagine glycosylation is found at Asn-263 and Asn-304. Cys-314 and Cys-347 form a disulfide bridge.

Belongs to the small leucine-rich proteoglycan (SLRP) family. SLRP class I subfamily. As to quaternary structure, binds to type I and type II collagen, fibronectin and TGF-beta. Forms a ternary complex with MFAP2 and ELN. Interacts with DPT. In terms of processing, the attached glycosaminoglycan chain can be either chondroitin sulfate or dermatan sulfate depending upon the tissue of origin.

Its subcellular location is the secreted. It is found in the extracellular space. The protein localises to the extracellular matrix. Functionally, may affect the rate of fibrils formation. This Ovis aries (Sheep) protein is Decorin (DCN).